The chain runs to 240 residues: 26.7 kDa heat shock protein, chloroplastic (240 aa).

Residues 1–43 (MAAPFALVSRVSPAARLPIRAAWRRARPTVGLPSSGRARQLAV) constitute a chloroplast transit peptide. The disordered stretch occupies residues 59–84 (HVNQDGGNQQGNAVQRRPRRSSALDG). The sHSP domain occupies 126-240 (LATGEVRMPW…ERKVIDVQVQ (115 aa)).

It belongs to the small heat shock protein (HSP20) family. May form oligomeric structures. Expressed in roots, stems, leaves, spikelets and embryos.

It localises to the plastid. It is found in the chloroplast. This Oryza sativa subsp. japonica (Rice) protein is 26.7 kDa heat shock protein, chloroplastic (HSP26.7).